Reading from the N-terminus, the 168-residue chain is Ribosome maturation factor RimM (168 aa).

A PRC barrel domain is found at 95 to 168 (EEGYYWSDLI…RITVDWGLDY (74 aa)).

This sequence belongs to the RimM family. As to quaternary structure, binds ribosomal protein uS19.

It localises to the cytoplasm. In terms of biological role, an accessory protein needed during the final step in the assembly of 30S ribosomal subunit, possibly for assembly of the head region. Essential for efficient processing of 16S rRNA. May be needed both before and after RbfA during the maturation of 16S rRNA. It has affinity for free ribosomal 30S subunits but not for 70S ribosomes. This is Ribosome maturation factor RimM from Nitrosospira multiformis (strain ATCC 25196 / NCIMB 11849 / C 71).